The chain runs to 249 residues: Isoamyl acetate-hydrolyzing esterase 1 homolog (249 aa).

Serine 24 acts as the Nucleophile in catalysis. At lysine 63 the chain carries N6-succinyllysine. Catalysis depends on aspartate 197, which acts as the Proton donor. Residue histidine 200 is the Proton acceptor of the active site.

The protein belongs to the 'GDSL' lipolytic enzyme family. IAH1 subfamily.

Its function is as follows. Probable lipase. The polypeptide is Isoamyl acetate-hydrolyzing esterase 1 homolog (Iah1) (Rattus norvegicus (Rat)).